The primary structure comprises 360 residues: Peptide chain release factor 1 (360 aa).

Gln235 is modified (N5-methylglutamine). The segment at 284-313 is disordered; sequence AKRQQAEASTRRNLLGSGDRSDRNRTYNFP.

It belongs to the prokaryotic/mitochondrial release factor family. Methylated by PrmC. Methylation increases the termination efficiency of RF1.

Its subcellular location is the cytoplasm. Peptide chain release factor 1 directs the termination of translation in response to the peptide chain termination codons UAG and UAA. The polypeptide is Peptide chain release factor 1 (Escherichia coli O127:H6 (strain E2348/69 / EPEC)).